Consider the following 40-residue polypeptide: Plasma membrane ATPase proteolipid 1 (40 aa).

Residues 1–2 constitute a propeptide that is removed on maturation; the sequence is MT. A helical membrane pass occupies residues 3-26; sequence LPGGVILVFILVGLACIAIIATII. Over 27 to 40 the chain is Cytoplasmic; that stretch reads YRKWQARQRGLQRF.

In terms of assembly, monomer and homodimer. Associated with the 100 kDa subunit of the plasma membrane H(+)-ATPase.

It localises to the cell membrane. In Saccharomyces cerevisiae (strain ATCC 204508 / S288c) (Baker's yeast), this protein is Plasma membrane ATPase proteolipid 1 (PMP1).